The primary structure comprises 286 residues: Prepilin leader peptidase/N-methyltransferase (286 aa).

The helical transmembrane segment at 11 to 31 (LGIFFVGLFSLMVGSFLNVVI) threads the bilayer. 4 residues coordinate Zn(2+): cysteine 74, cysteine 77, cysteine 99, and cysteine 102. Transmembrane regions (helical) follow at residues 106–126 (ISAR…IVAF), 132–152 (LSLG…FIDA), 161–181 (LTLP…FINL), 185–205 (VIGA…FKLI), 231–251 (LPII…GIGL), and 257–277 (MPFG…GAQI).

Belongs to the peptidase A24 family. Requires Zn(2+) as cofactor.

It localises to the cell inner membrane. It catalyses the reaction Typically cleaves a -Gly-|-Phe- bond to release an N-terminal, basic peptide of 5-8 residues from type IV prepilin, and then N-methylates the new N-terminal amino group, the methyl donor being S-adenosyl-L-methionine.. Functionally, plays an essential role in type IV pili and type II pseudopili formation by proteolytically removing the leader sequence from substrate proteins and subsequently monomethylating the alpha-amino group of the newly exposed N-terminal phenylalanine. The protein is Prepilin leader peptidase/N-methyltransferase (fimP) of Dichelobacter nodosus (Bacteroides nodosus).